Here is a 726-residue protein sequence, read N- to C-terminus: Catalase-peroxidase (726 aa).

The segment at residues 93-216 is a cross-link (tryptophyl-tyrosyl-methioninium (Trp-Tyr) (with M-242)); the sequence is WHSAGTYRVH…LAAVQMGLIY (124 aa). His-94 functions as the Proton acceptor in the catalytic mechanism. The segment at residues 216-242 is a cross-link (tryptophyl-tyrosyl-methioninium (Tyr-Met) (with W-93)); that stretch reads YVNPEGPNGNPDPVAAAVDIRETFTRM. Heme b is bound at residue His-257. The interval 471 to 490 is disordered; that stretch reads GSDKRGGANGARIRLSPQKD.

This sequence belongs to the peroxidase family. Peroxidase/catalase subfamily. Homodimer or homotetramer. The cofactor is heme b. Post-translationally, formation of the three residue Trp-Tyr-Met cross-link is important for the catalase, but not the peroxidase activity of the enzyme.

It catalyses the reaction H2O2 + AH2 = A + 2 H2O. The catalysed reaction is 2 H2O2 = O2 + 2 H2O. Bifunctional enzyme with both catalase and broad-spectrum peroxidase activity. This is Catalase-peroxidase from Methylacidiphilum infernorum (isolate V4) (Methylokorus infernorum (strain V4)).